The chain runs to 651 residues: F-box only protein 43 (651 aa).

Disordered regions lie at residues 14–42 (MTAG…LKGF) and 140–171 (LRRI…TSTL). Residues 27–36 (TSVSQDSGYS) show a composition bias toward polar residues. S33 is modified (phosphoserine; by PLK1). At T195 the chain carries Phosphothreonine; by CaMK2. Residues 424-499 (SGCFELPEDS…QDKSAHQRRK (76 aa)) enclose the F-box domain. The ZBR-type zinc-finger motif lies at 579 to 627 (ALKPCPRCQYPAKYQALKKRGTCSRKDCGFDFCSLCLCTFHGSKECGTG). 8 residues coordinate Zn(2+): C583, C586, C601, C606, C611, C614, H619, and C624.

Part of a SCF (SKP1-cullin-F-box) protein ligase complex. Interaction with SKP1 does not occur. Phosphorylated on Thr-195 by CaMK2 in response to calcium during egg activation, which promotes subsequent phosphorylation by PLK1, ubiquitination and protesomal degradation. In terms of processing, ubiquitinated by FBXW1 during egg activation, which promotes proteasomal degradation.

Its pathway is protein modification; protein ubiquitination. Required to prevent anaphase onset in cytostatic factor-arrested oocytes. Inhibits the anaphase-promoting complex/cyclosome (APC/C) ubiquitin ligase and prevents cyclin degradation. Probably recognizes and binds to some phosphorylated proteins and promotes their ubiquitination and degradation. This is F-box only protein 43 (fbxo43) from Xenopus laevis (African clawed frog).